Here is a 445-residue protein sequence, read N- to C-terminus: Xylose isomerase (445 aa).

Residues H99 and D102 contribute to the active site. Positions 230, 266, 269, 294, 305, 307, and 337 each coordinate Mg(2+).

The protein belongs to the xylose isomerase family. Homotetramer. It depends on Mg(2+) as a cofactor.

Its subcellular location is the cytoplasm. It catalyses the reaction alpha-D-xylose = alpha-D-xylulofuranose. The sequence is that of Xylose isomerase from Geobacillus kaustophilus (strain HTA426).